Consider the following 686-residue polypeptide: MAITKGEDVYASLLLNDAYLPGALVLAHSLRDSGTHKKLAILITPENISNEVVEQLQTVYDYVIPVETIQNDRPANLFLMNRPDLHSAFTKINLWKQTQFRKIVYIDADVVAYRAPDELFDLPHAFSAAPDIGWPDLFNTGVMVLSPNMGDYYAMLAMAERGISFDGADQGLLNMHFRNTYNRLSFTYNVTPSAHYQYIPAYKHFQSSINLLHFIGSEKPWVQGRTQTTGSSTYDEMIGRWWAVYDRHYRGNSNKTTDVVQKFVKGEQQQQQQQQQRNVSFQLPSSQSHKTQSHQTQSQNTHSTYTSHGASWDASRHSPPAGSKPEAANFPQTHYTMSSNTQQFVPPARYPSPPKDMWYKVPEAAPTQKPAPIFPWEKQAPEPTRVFPEPPPEQGKLSAASTATPSAVASATASPTLEPKSEAVTPTTPASANPWTSFTTRGNAWDDVPEINRYVDALQKHRRSGSKGSAAATSRPTSPGRAQSRSRKSSRVTDFPTEDDRPSLPVTPAPIQGPRSSRGENERQFPAAAGVPAQSEWNPAVQLEKLAIHQQETLQKLGERPAFGGLAIGTAGKEIPARALPFGSEDARSPTYVTQYPSVLSPKPLRANTTGTNSVRRILTIDEEGGDVPLTTTEKKTPSPLPTQPSVTTAPPSYQGPGVAFEKGEDFPTHETPALPTEEERDVLET.

Residues L13, N16, Y19, and R82 each coordinate UDP. Residues L13, N16, Y19, R82, K91, D107, A108, D109, N139, T140, D166, D169, and Q170 each contribute to the UDP-alpha-D-glucose site. UDP-binding residues include D107, A108, and D109. D107 is a binding site for Mn(2+). D109 is a binding site for Mn(2+). O-linked (Glc...) tyrosine glycans are attached at residues Y196 and Y198. 3 residues coordinate UDP: H213, G216, and K219. H213 contacts Mn(2+). UDP-alpha-D-glucose is bound by residues G216 and K219. 4 disordered regions span residues 264–331 (VKGE…ANFP), 381–444 (PEPT…RGNA), 460–533 (KHRR…GVPA), and 603–686 (KPLR…VLET). Composition is skewed to low complexity over residues 285–308 (SSQS…YTSH) and 398–416 (SAAS…ASPT). The interval 307 to 686 (SHGASWDASR…TEEERDVLET (380 aa)) is not required for catalytic activity. 2 stretches are compositionally biased toward polar residues: residues 424–442 (VTPT…TTRG) and 471–483 (AATS…GRAQ). Acidic residues predominate over residues 677-686 (TEEERDVLET).

Belongs to the glycosyltransferase 8 family. Glycogenin subfamily. In terms of assembly, interacts with glycogen synthase gsy-1; the interaction is direct. The cofactor is Mn(2+).

Its subcellular location is the cytoplasm. The protein localises to the vacuole. The enzyme catalyses L-tyrosyl-[glycogenin] + UDP-alpha-D-glucose = alpha-D-glucosyl-L-tyrosyl-[glycogenin] + UDP + H(+). It catalyses the reaction [1,4-alpha-D-glucosyl](n)-L-tyrosyl-[glycogenin] + UDP-alpha-D-glucose = [1,4-alpha-D-glucosyl](n+1)-L-tyrosyl-[glycogenin] + UDP + H(+). Functionally, self-glucosylating initiator of glycogen synthesis. It catalyzes the formation of a short alpha (1,4)-glucosyl chain covalently attached via a glucose 1-O-tyrosyl linkage to internal tyrosine residues and these chains act as primers for the elongation reaction catalyzed by glycogen synthase. This is Glycogenin from Neurospora crassa (strain ATCC 24698 / 74-OR23-1A / CBS 708.71 / DSM 1257 / FGSC 987).